Consider the following 256-residue polypeptide: Thiazole synthase (256 aa).

Residue Lys95 is the Schiff-base intermediate with DXP of the active site. 1-deoxy-D-xylulose 5-phosphate is bound by residues Gly156, 182-183 (AG), and 204-205 (NT).

It belongs to the ThiG family. In terms of assembly, homotetramer. Forms heterodimers with either ThiH or ThiS.

The protein resides in the cytoplasm. The catalysed reaction is [ThiS sulfur-carrier protein]-C-terminal-Gly-aminoethanethioate + 2-iminoacetate + 1-deoxy-D-xylulose 5-phosphate = [ThiS sulfur-carrier protein]-C-terminal Gly-Gly + 2-[(2R,5Z)-2-carboxy-4-methylthiazol-5(2H)-ylidene]ethyl phosphate + 2 H2O + H(+). It participates in cofactor biosynthesis; thiamine diphosphate biosynthesis. In terms of biological role, catalyzes the rearrangement of 1-deoxy-D-xylulose 5-phosphate (DXP) to produce the thiazole phosphate moiety of thiamine. Sulfur is provided by the thiocarboxylate moiety of the carrier protein ThiS. In vitro, sulfur can be provided by H(2)S. This is Thiazole synthase from Escherichia coli O6:H1 (strain CFT073 / ATCC 700928 / UPEC).